A 172-amino-acid polypeptide reads, in one-letter code: Allergen Bos d 2 (172 aa).

The N-terminal stretch at 1–16 (MKAVFLTLLFGLVCTA) is a signal peptide. Pyrrolidone carboxylic acid is present on Q17. Cystine bridges form between C60/C64 and C79/C170.

This sequence belongs to the calycin superfamily. Lipocalin family. As to expression, found exclusively in skin. Produced in sweat glands and transported to the skin surface.

Its subcellular location is the secreted. Functionally, probable pheromone carrier. This Bos taurus (Bovine) protein is Allergen Bos d 2.